A 145-amino-acid polypeptide reads, in one-letter code: D-aminoacyl-tRNA deacylase (145 aa).

Positions 137–138 (GP) match the Gly-cisPro motif, important for rejection of L-amino acids motif.

The protein belongs to the DTD family. Homodimer.

It localises to the cytoplasm. It carries out the reaction glycyl-tRNA(Ala) + H2O = tRNA(Ala) + glycine + H(+). The catalysed reaction is a D-aminoacyl-tRNA + H2O = a tRNA + a D-alpha-amino acid + H(+). Functionally, an aminoacyl-tRNA editing enzyme that deacylates mischarged D-aminoacyl-tRNAs. Also deacylates mischarged glycyl-tRNA(Ala), protecting cells against glycine mischarging by AlaRS. Acts via tRNA-based rather than protein-based catalysis; rejects L-amino acids rather than detecting D-amino acids in the active site. By recycling D-aminoacyl-tRNA to D-amino acids and free tRNA molecules, this enzyme counteracts the toxicity associated with the formation of D-aminoacyl-tRNA entities in vivo and helps enforce protein L-homochirality. This Pseudomonas fluorescens (strain ATCC BAA-477 / NRRL B-23932 / Pf-5) protein is D-aminoacyl-tRNA deacylase.